Here is a 399-residue protein sequence, read N- to C-terminus: Homoserine O-acetyltransferase (399 aa).

The region spanning 63 to 372 is the AB hydrolase-1 domain; the sequence is NAILVCHALT…TDRGHDAFLL (310 aa). The active-site Nucleophile is serine 168. Arginine 238 is a binding site for substrate. Active-site residues include aspartate 334 and histidine 367. Aspartate 368 contacts substrate.

This sequence belongs to the AB hydrolase superfamily. MetX family. In terms of assembly, homodimer.

It is found in the cytoplasm. It catalyses the reaction L-homoserine + acetyl-CoA = O-acetyl-L-homoserine + CoA. Its pathway is amino-acid biosynthesis; L-methionine biosynthesis via de novo pathway; O-acetyl-L-homoserine from L-homoserine: step 1/1. Its function is as follows. Transfers an acetyl group from acetyl-CoA to L-homoserine, forming acetyl-L-homoserine. This Nitrobacter hamburgensis (strain DSM 10229 / NCIMB 13809 / X14) protein is Homoserine O-acetyltransferase.